The chain runs to 141 residues: Large ribosomal subunit protein uL11 (141 aa).

It belongs to the universal ribosomal protein uL11 family. Part of the ribosomal stalk of the 50S ribosomal subunit. Interacts with L10 and the large rRNA to form the base of the stalk. L10 forms an elongated spine to which L12 dimers bind in a sequential fashion forming a multimeric L10(L12)X complex. Post-translationally, one or more lysine residues are methylated.

In terms of biological role, forms part of the ribosomal stalk which helps the ribosome interact with GTP-bound translation factors. This is Large ribosomal subunit protein uL11 from Clostridium novyi (strain NT).